We begin with the raw amino-acid sequence, 82 residues long: Cortexin-1 (82 aa).

Positions 1–20 (MSSAWTLSPEPLPPSTGPPV) are disordered. Residues 30-50 (TVFAFVLCLLVVLVLLMVRCV) traverse the membrane as a helical segment.

This sequence belongs to the cortexin family.

It is found in the membrane. Its function is as follows. May mediate extracellular or intracellular signaling of cortical neurons during forebrain development. This chain is Cortexin-1 (Ctxn1), found in Mus musculus (Mouse).